The primary structure comprises 582 residues: Hemagglutinin-neuraminidase (582 aa).

Residues 35–55 (ILVLSVQAVTLILVIVTLGEL) traverse the membrane as a helical segment. 3 disulfides stabilise this stretch: C178-C202, C192-C253, and C244-C257. 2 N-linked (GlcNAc...) asparagine; by host glycosylation sites follow: N284 and N329. 3 disulfide bridges follow: C350–C471, C382–C392, and C465–C475. N400 and N448 each carry an N-linked (GlcNAc...) asparagine; by host glycan. N507 is a glycosylation site (N-linked (GlcNAc...) asparagine; by host). Cysteines 545 and 556 form a disulfide.

Belongs to the paramyxoviruses hemagglutinin-neuraminidase family. In terms of assembly, homodimer. Further forms homotetramer (dimer of dimers). Interacts with F protein trimer.

It is found in the virion membrane. Its subcellular location is the host cell membrane. The catalysed reaction is Hydrolysis of alpha-(2-&gt;3)-, alpha-(2-&gt;6)-, alpha-(2-&gt;8)- glycosidic linkages of terminal sialic acid residues in oligosaccharides, glycoproteins, glycolipids, colominic acid and synthetic substrates.. In terms of biological role, attaches the virus to alpha-2,3-linked sialic acid-containing cell receptors and thereby initiating infection. Binding of HN protein to the receptor induces a conformational change that allows the F protein to trigger virion/cell membranes fusion. Binds to the glycan motifs sialyl Lewis (SLe) and GM2 ganglioside (GM2-glycan). Functionally, neuraminidase activity ensures the efficient spread of the virus by dissociating the mature virions from the neuraminic acid containing glycoproteins. The polypeptide is Hemagglutinin-neuraminidase (HN) (Homo sapiens (Human)).